Here is a 311-residue protein sequence, read N- to C-terminus: tRNA-cytidine(32) 2-sulfurtransferase (311 aa).

Residues 45 to 50 (SGGKDS) carry the PP-loop motif motif. [4Fe-4S] cluster contacts are provided by cysteine 120, cysteine 123, and cysteine 211.

This sequence belongs to the TtcA family. Homodimer. The cofactor is Mg(2+). [4Fe-4S] cluster is required as a cofactor.

The protein localises to the cytoplasm. The enzyme catalyses cytidine(32) in tRNA + S-sulfanyl-L-cysteinyl-[cysteine desulfurase] + AH2 + ATP = 2-thiocytidine(32) in tRNA + L-cysteinyl-[cysteine desulfurase] + A + AMP + diphosphate + H(+). The protein operates within tRNA modification. Functionally, catalyzes the ATP-dependent 2-thiolation of cytidine in position 32 of tRNA, to form 2-thiocytidine (s(2)C32). The sulfur atoms are provided by the cysteine/cysteine desulfurase (IscS) system. The polypeptide is tRNA-cytidine(32) 2-sulfurtransferase (Shewanella halifaxensis (strain HAW-EB4)).